The sequence spans 422 residues: Gamma-glutamyl phosphate reductase (422 aa).

Belongs to the gamma-glutamyl phosphate reductase family.

The protein localises to the cytoplasm. It catalyses the reaction L-glutamate 5-semialdehyde + phosphate + NADP(+) = L-glutamyl 5-phosphate + NADPH + H(+). It participates in amino-acid biosynthesis; L-proline biosynthesis; L-glutamate 5-semialdehyde from L-glutamate: step 2/2. Functionally, catalyzes the NADPH-dependent reduction of L-glutamate 5-phosphate into L-glutamate 5-semialdehyde and phosphate. The product spontaneously undergoes cyclization to form 1-pyrroline-5-carboxylate. The polypeptide is Gamma-glutamyl phosphate reductase (Chloroflexus aggregans (strain MD-66 / DSM 9485)).